Here is a 288-residue protein sequence, read N- to C-terminus: Transmembrane protein 163 (288 aa).

Residues 1 to 64 form a disordered region; it reads MEPALGSERR…ESGQFSDGLE (64 aa). Residues 1–87 are Cytoplasmic-facing; it reads MEPALGSERR…HEAQNYRKKA (87 aa). Serine 11 is modified (phosphoserine). A compositionally biased stretch (pro residues) spans 12 to 24; the sequence is PPGPGVPRPPPRG. Residues 25 to 42 show a composition bias toward low complexity; that stretch reads HAPSTAAPAPSPAPMSSS. A required for interaction with MCOLN1 region spans residues 41–71; that stretch reads SSVQSDEERQPRISESGQFSDGLEDRGLLES. Residues serine 45, serine 54, serine 56, and serine 60 each carry the phosphoserine modification. The helical transmembrane segment at 88–108 threads the bilayer; the sequence is LWVSWLSIIVTLALAVAAFTV. Over 109 to 115 the chain is Extracellular; the sequence is SVMRYSA. Residues 116-136 traverse the membrane as a helical segment; sequence SAFGFAFDAILDVLSSAIVLW. Residues 137-149 lie on the Cytoplasmic side of the membrane; sequence RYSNAAAVHSANR. A helical transmembrane segment spans residues 150-170; it reads EYIACVILGVIFLLSSICIVV. Topologically, residues 171 to 186 are extracellular; that stretch reads KAIHDLSTRLLPEVDD. Residues 187–207 form a helical membrane-spanning segment; the sequence is FLFSVSILSGILCSVLAVLKF. The Cytoplasmic segment spans residues 208–216; the sequence is MLGKVLTSR. A helical transmembrane segment spans residues 217–237; that stretch reads ALITDGFNSLVGGVMGFSILL. Residues 238 to 254 lie on the Extracellular side of the membrane; the sequence is SAEVFKHNAAVWYLDGS. The helical transmembrane segment at 255 to 275 threads the bilayer; that stretch reads IGVLIGLTIFAYGVKLLIDMV. Residues 276-288 lie on the Cytoplasmic side of the membrane; the sequence is PRVRQTRHYEMFE.

The protein belongs to the TMEM163 family. As to quaternary structure, homodimer. Interacts with MCOLN1. Interacts with SLC30A1, SLC30A2, SLC30A3 and SLC30A4. Widely expressed, with high expression in the brain, cerebellum, heart, lung and spleen. In the brain, mainly expressed in the glutaminergic neuron subpopulations.

It localises to the cytoplasmic vesicle. The protein localises to the secretory vesicle. It is found in the synaptic vesicle membrane. The protein resides in the early endosome membrane. Its subcellular location is the late endosome membrane. It localises to the lysosome membrane. The protein localises to the cell membrane. The catalysed reaction is Zn(2+)(in) = Zn(2+)(out). Its function is as follows. Zinc ion transporter that mediates zinc efflux and plays a crucial role in intracellular zinc homeostasis. Binds the divalent cations Zn(2+), Ni(2+), and to a minor extent Cu(2+). Is a functional modulator of P2X purinoceptors, including P2RX1, P2RX3, P2RX4 and P2RX7. Plays a role in central nervous system development and is required for myelination, and survival and proliferation of oligodendrocytes. The chain is Transmembrane protein 163 (Tmem163) from Mus musculus (Mouse).